The primary structure comprises 1713 residues: Serine/threonine-protein kinase MRCK beta (1713 aa).

The region spanning 76–342 (FEIIKVIGRG…IEDFKKHAFF (267 aa)) is the Protein kinase domain. ATP contacts are provided by residues 82 to 90 (IGRGAFGEV) and Lys105. Asp200 (proton acceptor) is an active-site residue. A phosphoserine; by autocatalysis mark is found at Ser221 and Ser233. Phosphothreonine; by autocatalysis is present on Thr239. Residues 343-413 (EGLNWENIRN…TTESCFSDRG (71 aa)) form the AGC-kinase C-terminal domain. Thr423 carries the phosphothreonine modification. Residues 434–649 (LENSLQIEAY…ASKERKLREH (216 aa)) are a coiled coil. Residue Arg671 is modified to Omega-N-methylarginine. 2 coiled-coil regions span residues 681-815 (QEIS…AHWE) and 878-939 (ELQS…FRAD). Position 927 is a phosphoserine (Ser927). Tyr954 is modified (phosphotyrosine). A compositionally biased stretch (polar residues) spans 971 to 994 (ASDQETQASKMDLSPSVSVATSTE). A disordered region spans residues 971-1022 (ASDQETQASKMDLSPSVSVATSTEQQEDMARPQQRPSPVPLPSTQALAMAGP). A Phorbol-ester/DAG-type zinc finger spans residues 1026 to 1076 (AHQFSIKSFPSPTQCSHCTSLMVGLIRQGYACEVCAFSCHVSCKDSAPQVC). In terms of domain architecture, PH spans 1096–1215 (GTAYKGYVKV…WVGILEGLQA (120 aa)). In terms of domain architecture, CNH spans 1241 to 1515 (IKAVLAAAIV…RPLNSDGSLN (275 aa)). The 14-residue stretch at 1585-1598 (ISNPTNFNHVAHMG) folds into the CRIB domain. The tract at residues 1616 to 1713 (TVQEEKQGPT…EGLDQPSCDA (98 aa)) is disordered. A compositionally biased stretch (basic and acidic residues) spans 1666-1677 (DFDKEPDSDSTK). Ser1682, Ser1684, Ser1688, Ser1692, and Ser1695 each carry phosphoserine.

This sequence belongs to the protein kinase superfamily. AGC Ser/Thr protein kinase family. DMPK subfamily. In terms of assembly, homodimer and homotetramer via the coiled coil regions. Interacts tightly with GTP-bound but not GDP-bound CDC42. Interacts with TJP1; this interaction requires the presence of catalytically active CDC42. Forms a tripartite complex with MYO18A and LURAP1 with the latter acting as an adapter connecting CDC42BPB and MYO18A. LURAP1 binding results in activation of CDC42BPB by abolition of its negative autoregulation. Interacts with STRIP1, STRN3 and SIKE1. Interacts with CPNE4 (via VWFA domain). Interacts with LURAP1. Interacts (via AGC-kinase C-terminal domain) with FAM89B/LRAP25 (via LRR repeat). Forms a tripartite complex with FAM89B/LRAP25 and LIMK1. Mg(2+) serves as cofactor. Proteolytically cleaved by caspases upon apoptosis induction.

It is found in the cytoplasm. It localises to the cell membrane. The protein localises to the cell junction. The protein resides in the cell projection. Its subcellular location is the lamellipodium. It catalyses the reaction L-seryl-[protein] + ATP = O-phospho-L-seryl-[protein] + ADP + H(+). The catalysed reaction is L-threonyl-[protein] + ATP = O-phospho-L-threonyl-[protein] + ADP + H(+). Maintained in an inactive, closed conformation by an interaction between the kinase domain and the negative autoregulatory C-terminal coiled-coil region. Agonist binding to the phorbol ester binding site disrupts this, releasing the kinase domain to allow N-terminus-mediated dimerization and kinase activation by transautophosphorylation. Inhibited by chelerythrine chloride. Functionally, serine/threonine-protein kinase which is an important downstream effector of CDC42 and plays a role in the regulation of cytoskeleton reorganization and cell migration. Regulates actin cytoskeletal reorganization via phosphorylation of PPP1R12C and MYL9/MLC2. In concert with MYO18A and LURAP1, is involved in modulating lamellar actomyosin retrograde flow that is crucial to cell protrusion and migration. Phosphorylates PPP1R12A. In concert with FAM89B/LRAP25 mediates the targeting of LIMK1 to the lamellipodium resulting in its activation and subsequent phosphorylation of CFL1 which is important for lamellipodial F-actin regulation. This is Serine/threonine-protein kinase MRCK beta from Mus musculus (Mouse).